The primary structure comprises 85 residues: Small ribosomal subunit protein uS17 (85 aa).

It belongs to the universal ribosomal protein uS17 family. As to quaternary structure, part of the 30S ribosomal subunit.

Functionally, one of the primary rRNA binding proteins, it binds specifically to the 5'-end of 16S ribosomal RNA. This chain is Small ribosomal subunit protein uS17, found in Spiroplasma citri.